The sequence spans 252 residues: MNILLTNDDGIEAEGINTLAELLSKYHNVTMVAPENQRSASSHSITIYEPIIVKQVKKPYNVEAYSISGTPADCVRVALDKLVPDNIDMVISGINKGLNIGNDILYSGTVSAAIEGAMYKVPSMAVSAQFIKNKKENYKIAAKYALGMLNRLKKEDLKNDVVLNLNIPFCSEEEIKGIKVCKVGNKIFNTRFLEEIDKEGNKILKLEGDINEDIYEGTDVYYIRNKYVTLTPLHYDLTNFNILEETEQLFLS.

A divalent metal cation contacts are provided by Asp8, Asp9, Ser39, and Asn95.

It belongs to the SurE nucleotidase family. It depends on a divalent metal cation as a cofactor.

Its subcellular location is the cytoplasm. The catalysed reaction is a ribonucleoside 5'-phosphate + H2O = a ribonucleoside + phosphate. Its function is as follows. Nucleotidase that shows phosphatase activity on nucleoside 5'-monophosphates. The polypeptide is 5'-nucleotidase SurE (Clostridium botulinum (strain Loch Maree / Type A3)).